Consider the following 350-residue polypeptide: UDP-N-acetylenolpyruvoylglucosamine reductase (350 aa).

The FAD-binding PCMH-type domain maps to 24–195 (HVEATARWLL…VAVEFNLPLL (172 aa)). The active site involves arginine 172. Residue serine 245 is the Proton donor of the active site. Glutamate 342 is an active-site residue.

The protein belongs to the MurB family. It depends on FAD as a cofactor.

It is found in the cytoplasm. It carries out the reaction UDP-N-acetyl-alpha-D-muramate + NADP(+) = UDP-N-acetyl-3-O-(1-carboxyvinyl)-alpha-D-glucosamine + NADPH + H(+). Its pathway is cell wall biogenesis; peptidoglycan biosynthesis. Cell wall formation. This is UDP-N-acetylenolpyruvoylglucosamine reductase from Xanthomonas oryzae pv. oryzae (strain PXO99A).